Here is a 558-residue protein sequence, read N- to C-terminus: C4b-binding protein alpha chain (558 aa).

The signal sequence occupies residues 1–13 (MSLTAALWVAVFG). 8 consecutive Sushi domains span residues 14 to 74 (KCGP…ACVK), 75 to 136 (KSCR…ECVI), 137 to 201 (AKCG…TCER), 202 to 260 (IICP…VCEL), 261 to 326 (NSCT…GCKE), 327 to 388 (ICCP…SCHQ), 389 to 445 (SCDF…QCKA), and 446 to 503 (LCRK…RCEQ). Intrachain disulfides connect Cys-15/Cys-60, Cys-45/Cys-72, Cys-77/Cys-118, Cys-104/Cys-134, Cys-139/Cys-182, Cys-168/Cys-199, Cys-204/Cys-246, Cys-232/Cys-258, Cys-263/Cys-312, Cys-296/Cys-324, Cys-329/Cys-373, Cys-363/Cys-386, Cys-390/Cys-431, Cys-417/Cys-443, Cys-447/Cys-488, and Cys-474/Cys-501. Asn-31 carries N-linked (GlcNAc...) asparagine glycosylation. Residues Asn-177 and Asn-186 are each glycosylated (N-linked (GlcNAc...) asparagine). 2 N-linked (GlcNAc...) asparagine glycosylation sites follow: Asn-469 and Asn-491.

In terms of assembly, disulfide-linked complex of alpha and beta chains.

It localises to the secreted. Its function is as follows. Controls the classical pathway of complement activation. It binds as a cofactor to C3b/C4b inactivator (C3bINA), which then hydrolyzes the complement fragment C4b. It also accelerates the degradation of the C4bC2a complex (C3 convertase) by dissociating the complement fragment C2a. Alpha chain binds C4b. It also interacts with anticoagulant protein S and with serum amyloid P component. This chain is C4b-binding protein alpha chain (C4bpa), found in Rattus norvegicus (Rat).